A 130-amino-acid chain; its full sequence is Small ribosomal subunit protein bS16 (130 aa).

Residues 80–130 (AGHTPKKERANMKKAQPGKKAVERAEEKAAKASAAAEAPAEAPAAEAAAEE) form a disordered region. Residues 99–109 (KAVERAEEKAA) are compositionally biased toward basic and acidic residues. Residues 110-130 (KASAAAEAPAEAPAAEAAAEE) are compositionally biased toward low complexity.

Belongs to the bacterial ribosomal protein bS16 family.

In Jannaschia sp. (strain CCS1), this protein is Small ribosomal subunit protein bS16.